A 177-amino-acid chain; its full sequence is Ribonuclease clavin (177 aa).

The first 27 residues, 1–27 (MVAIKNLVLVALTAVTALAMPSPLEER), serve as a signal peptide directing secretion. Intrachain disulfides connect C33–C175 and C103–C159. Residue H77 is part of the active site. Positions 98-117 (WGNSDCDRPPKHSKNGDGKN) are disordered. A compositionally biased stretch (basic and acidic residues) spans 102–117 (DCDRPPKHSKNGDGKN). The active-site Proton acceptor is the E123. The active-site Proton donor is the H164.

It belongs to the ribonuclease U2 family.

The protein localises to the secreted. In terms of biological role, clavin has the same substrate specificity as alpha-sarcin. It is specific for purines in both single- and double-stranded RNA. Its toxic action on eukaryotic cells is the result of cleavage of a single phosphodiester bond in the 60S subunit of ribosomes. The protein is Ribonuclease clavin (cla) of Aspergillus clavatus (strain ATCC 1007 / CBS 513.65 / DSM 816 / NCTC 3887 / NRRL 1 / QM 1276 / 107).